A 206-amino-acid polypeptide reads, in one-letter code: Small ribosomal subunit protein uS2 (206 aa).

It belongs to the universal ribosomal protein uS2 family.

The chain is Small ribosomal subunit protein uS2 from Methanothrix thermoacetophila (strain DSM 6194 / JCM 14653 / NBRC 101360 / PT) (Methanosaeta thermophila).